A 124-amino-acid polypeptide reads, in one-letter code: Urease subunit beta (124 aa).

Belongs to the urease beta subunit family. In terms of assembly, heterotrimer of UreA (gamma), UreB (beta) and UreC (alpha) subunits. Three heterotrimers associate to form the active enzyme.

It localises to the cytoplasm. It catalyses the reaction urea + 2 H2O + H(+) = hydrogencarbonate + 2 NH4(+). The protein operates within nitrogen metabolism; urea degradation; CO(2) and NH(3) from urea (urease route): step 1/1. This Bacillus velezensis (strain DSM 23117 / BGSC 10A6 / LMG 26770 / FZB42) (Bacillus amyloliquefaciens subsp. plantarum) protein is Urease subunit beta.